We begin with the raw amino-acid sequence, 687 residues long: CWF19-like protein 2 homolog (687 aa).

Residues 6 to 51 (FESGREKDKARQELREAREAMLQQAKERAELRGQRERQKELRGEAD) adopt a coiled-coil conformation. Over residues 24–50 (EAMLQQAKERAELRGQRERQKELRGEA) the composition is skewed to basic and acidic residues. The interval 24–281 (EAMLQQAKER…PKSRPSCLTD (258 aa)) is disordered. Positions 66–92 (KKSKKNVSKHKSRSKSKSSKKSRKHRN) are enriched in basic residues. Positions 93-107 (SSSSSESSTSSSSSF) are enriched in low complexity. Positions 108-131 (SEDEKERKRRKKKSKRSRKESASE) form a coiled coil. Positions 114 to 125 (RKRRKKKSKRSR) are enriched in basic residues. 2 positions are modified to phosphoserine: S128 and S130. Basic and acidic residues-rich tracts occupy residues 146 to 157 (VTKKEPPQRDDW) and 168 to 180 (FSRERKEPAKPNE). The stretch at 290-325 (KAIKAELKGKKELAAELNQQLEAARKERAEFIASGE) forms a coiled coil. Residues 355–383 (VRPLVQSGDPNESYGGRMGPKRGSKKVDT) form a disordered region. Positions 444–475 (KQISASDAEKREMQSAIREHEKLVATLDNCER) form a coiled coil.

Belongs to the CWF19 family.

The sequence is that of CWF19-like protein 2 homolog from Drosophila melanogaster (Fruit fly).